The following is a 918-amino-acid chain: Hexokinase-1 (918 aa).

An N-acetylmethionine modification is found at Met-1. The mitochondrial-binding peptide (MBP) stretch occupies residues 1–10 (MIAAQLLAYY). Hexokinase domains follow at residues 16-458 (DDQV…MVTA) and 464-906 (AEQH…LITA). ATP is bound by residues Arg-30 and 84-89 (DLGGSS). A hexokinase small subdomain 1 region spans residues 73 to 207 (DGSEKGDFIA…DYDANIVAVV (135 aa)). 84 to 88 (DLGGS) contacts D-glucose 6-phosphate. D-glucose is bound by residues Ser-155, 172-173 (TK), and 208-209 (ND). Positions 208–447 (NDTVGTMMTC…SDVRFLLSES (240 aa)) are hexokinase large subdomain 1. Residues Asp-209 and Thr-232 each coordinate D-glucose 6-phosphate. D-glucose contacts are provided by residues Asn-235, Glu-260, and 291–294 (QLFE). Residue Ser-337 is modified to Phosphoserine. Residue 413 to 415 (DGS) participates in D-glucose 6-phosphate binding. 425–426 (RR) is an ATP binding site. D-glucose 6-phosphate is bound by residues Thr-449, 532–536 (DLGGT), and Ser-603. Residues 521–655 (DGTEHGDFLA…EFDLDVVAVV (135 aa)) are hexokinase small subdomain 2. 532-537 (DLGGTN) serves as a coordination point for ATP. D-glucose-binding positions include 620–621 (TK) and 656–657 (ND). The hexokinase large subdomain 2 stretch occupies residues 656–895 (NDTVGTMMTC…CTVSFLLSED (240 aa)). Residues Asp-657 and Thr-680 each contribute to the D-glucose 6-phosphate site. Thr-680 contacts ATP. Asn-683, Glu-708, and Glu-742 together coordinate D-glucose. ATP-binding positions include 747–748 (GM), 784–788 (TKFLS), and 863–867 (TLYKL). D-glucose 6-phosphate contacts are provided by residues 861 to 863 (DGT) and Ser-897.

Belongs to the hexokinase family. In terms of assembly, monomer. Interacts with RABL2/RABL2A; binds preferentially to GTP-bound RABL2. Interacts with VDAC1. The HK1-VDAC1 complex interacts with ATF2. Interacts (via N-terminal spermatogenic cell-specific region) with PFKM (via C-terminus). Interacts with SMAD5. Expressed in flagella of epididymal sperm.

The protein localises to the mitochondrion outer membrane. It localises to the cytoplasm. The protein resides in the cytosol. The enzyme catalyses a D-hexose + ATP = a D-hexose 6-phosphate + ADP + H(+). The catalysed reaction is D-fructose + ATP = D-fructose 6-phosphate + ADP + H(+). It catalyses the reaction D-glucose + ATP = D-glucose 6-phosphate + ADP + H(+). It carries out the reaction D-mannose + ATP = D-mannose 6-phosphate + ADP + H(+). The enzyme catalyses D-glucosamine + ATP = D-glucosamine 6-phosphate + ADP + H(+). It functions in the pathway carbohydrate metabolism; hexose metabolism. The protein operates within carbohydrate degradation; glycolysis; D-glyceraldehyde 3-phosphate and glycerone phosphate from D-glucose: step 1/4. Hexokinase is an allosteric enzyme inhibited by its product D-glucose 6-phosphate. Hexokinase activity is inhibited by N-acetyl-D-glucosamine. Functionally, catalyzes the phosphorylation of various hexoses, such as D-glucose, D-glucosamine, D-fructose, D-mannose and 2-deoxy-D-glucose, to hexose 6-phosphate (D-glucose 6-phosphate, D-glucosamine 6-phosphate, D-fructose 6-phosphate, D-mannose 6-phosphate and 2-deoxy-D-glucose 6-phosphate, respectively). Mediates the initial step of glycolysis by catalyzing phosphorylation of D-glucose to D-glucose 6-phosphate. Involved in innate immunity and inflammation by acting as a pattern recognition receptor for bacterial peptidoglycan. When released in the cytosol, N-acetyl-D-glucosamine component of bacterial peptidoglycan inhibits the hexokinase activity of HK1 and causes its dissociation from mitochondrial outer membrane, thereby activating the NLRP3 inflammasome. In Rattus norvegicus (Rat), this protein is Hexokinase-1.